Here is a 597-residue protein sequence, read N- to C-terminus: Nucleolar protein 58 (597 aa).

The Nop domain occupies 285 to 410 (IAPNMTELVG…LENNLRQLEG (126 aa)). A disordered region spans residues 452–597 (AEAPKKPLIQ…KKKKKKSSKE (146 aa)). Positions 482 to 499 (KSKKDKKEKKEKKDKKAK) are enriched in basic residues. The segment covering 532 to 551 (IKEDGTLEILSKKDFKGKDA) has biased composition (basic and acidic residues). Positions 552–561 (EAEEEAEEEE) are enriched in acidic residues. A compositionally biased stretch (basic residues) spans 588 to 597 (KKKKKKSSKE).

This sequence belongs to the NOP5/NOP56 family.

Its subcellular location is the nucleus. The protein localises to the nucleolus. Required for pre-18S rRNA processing. May bind microtubules. The sequence is that of Nucleolar protein 58 (nop-58) from Neurospora crassa (strain ATCC 24698 / 74-OR23-1A / CBS 708.71 / DSM 1257 / FGSC 987).